The following is an 88-amino-acid chain: Cold-regulated protein BLT14 (88 aa).

This Hordeum vulgare (Barley) protein is Cold-regulated protein BLT14 (BLT14).